The chain runs to 238 residues: tRNA1(Val) (adenine(37)-N6)-methyltransferase (238 aa).

It belongs to the methyltransferase superfamily. tRNA (adenine-N(6)-)-methyltransferase family.

It localises to the cytoplasm. It carries out the reaction adenosine(37) in tRNA1(Val) + S-adenosyl-L-methionine = N(6)-methyladenosine(37) in tRNA1(Val) + S-adenosyl-L-homocysteine + H(+). Functionally, specifically methylates the adenine in position 37 of tRNA(1)(Val) (anticodon cmo5UAC). The protein is tRNA1(Val) (adenine(37)-N6)-methyltransferase of Shewanella putrefaciens (strain CN-32 / ATCC BAA-453).